Here is a 405-residue protein sequence, read N- to C-terminus: mRNA cap guanine-N(7) methyltransferase (405 aa).

The interval 1–78 (MDNILNPEDN…PRLEEGHGSL (78 aa)) is disordered. Composition is skewed to polar residues over residues 9 to 18 (DNVSQTNTET) and 36 to 45 (KFTASGQNLD). Over residues 58–75 (KAGEPESPSKRPRLEEGH) the composition is skewed to basic and acidic residues. The 308-residue stretch at 97 to 404 (SRIFHLRNFN…IYLLFAFEKQ (308 aa)) folds into the mRNA cap 0 methyltransferase domain. 106 to 107 (NN) is an mRNA binding site. Lys-110, Gly-134, Asp-156, Asp-190, Gln-213, and Tyr-218 together coordinate S-adenosyl-L-methionine.

The protein belongs to the class I-like SAM-binding methyltransferase superfamily. mRNA cap 0 methyltransferase family.

The protein localises to the nucleus. The enzyme catalyses a 5'-end (5'-triphosphoguanosine)-ribonucleoside in mRNA + S-adenosyl-L-methionine = a 5'-end (N(7)-methyl 5'-triphosphoguanosine)-ribonucleoside in mRNA + S-adenosyl-L-homocysteine. Its function is as follows. Catalytic subunit of the mRNA-capping methyltransferase RNMT:RAMAC complex that methylates the N7 position of the added guanosine to the 5'-cap structure of mRNAs. Binds RNA containing 5'-terminal GpppC. The polypeptide is mRNA cap guanine-N(7) methyltransferase (rnmt) (Xenopus tropicalis (Western clawed frog)).